We begin with the raw amino-acid sequence, 396 residues long: Elongation factor Tu (396 aa).

In terms of domain architecture, tr-type G spans 10–206; it reads KPHVNVGTIG…ALDTYIPEPE (197 aa). The segment at 19 to 26 is G1; sequence GHVDHGKT. A GTP-binding site is contributed by 19 to 26; it reads GHVDHGKT. Thr-26 contacts Mg(2+). Residues 60–64 form a G2 region; that stretch reads GITIN. The segment at 81–84 is G3; it reads DCPG. GTP is bound by residues 81-85 and 136-139; these read DCPGH and NKAD. The tract at residues 136 to 139 is G4; the sequence is NKAD. The interval 174-176 is G5; it reads SAL.

This sequence belongs to the TRAFAC class translation factor GTPase superfamily. Classic translation factor GTPase family. EF-Tu/EF-1A subfamily. In terms of assembly, monomer.

It is found in the cytoplasm. It carries out the reaction GTP + H2O = GDP + phosphate + H(+). GTP hydrolase that promotes the GTP-dependent binding of aminoacyl-tRNA to the A-site of ribosomes during protein biosynthesis. In Thiobacillus denitrificans (strain ATCC 25259 / T1), this protein is Elongation factor Tu.